Here is a 413-residue protein sequence, read N- to C-terminus: Oxidoreductase vrtI (413 aa).

The Fe2OG dioxygenase domain maps to 235–341 (DAESLTTLSM…RYSIAYFLRA (107 aa)). Residues His262, Asp264, and His319 each coordinate Fe cation. Arg332 is a 2-oxoglutarate binding site.

This sequence belongs to the iron/ascorbate-dependent oxidoreductase family.

It participates in secondary metabolite biosynthesis; terpenoid biosynthesis. Its function is as follows. Oxidoreductase; part of the gene cluster that mediates the biosynthesis of viridicatumtoxin, a tetracycline-like fungal meroterpenoid with a unique, fused spirobicyclic ring system. The first step of the pathway is the production of the malonamoyl-CoA starter unit for the polyketide synthase vrtA. The aldolase vrtJ may be involved in the synthesis of the malonamate substrate for malonamoyl-CoA synthetase vrtB. The polyketide synthase vrtA then may utilize the malonamoyl-CoA starter unit, followed by sequential condensation of eight malonyl-CoA units to form the polyketide backbone. The cyclization of the last ring could be mediated by the lactamase-like protein vrtG. The proposed post-PKS tailoring steps are a hydroxylation at C5 catalyzed the cytochrome P450 monooxygenase vrtE, a hydroxylation at C12a catalyzed by VrtH and/or VrtI, and an O-methylation by the O-methyltransferase vrtF. VrtC is then proposed to catalyze the transfer of a geranyl group synthesized by vrtD to the aromatic C ring of the tetracyclic polyketide intermediate of viridicatumtoxin to yield previridicatumtoxin. Finally, the cytochrome P450 monooxygenase vrtK catalyzes the spirocyclization of the geranyl moiety of previridicatumtoxin to afford viridicatumtoxin. In Penicillium aethiopicum, this protein is Oxidoreductase vrtI.